Reading from the N-terminus, the 516-residue chain is Rho guanine nucleotide exchange factor 9 (516 aa).

Residues 8 to 67 form the SH3 domain; that stretch reads DSIVSAEAVWDHVTMANRELAFKAGDVIKVLDASNKDWWWGQIDDEEGWFPASFVRLWVN. The tract at residues 100-110 is interaction with GPHN; the sequence is RDQMRANVINE. A DH domain is found at 103 to 287; it reads MRANVINEIM…RNVTQQINER (185 aa). A PH domain is found at 318 to 425; it reads ELIYTGEMAW…WLRAFREERK (108 aa). The interval 453 to 480 is disordered; that stretch reads PKQKGVNSARSVPPSYPPPQDPLNHGQY. S502 is modified (phosphoserine).

In terms of assembly, interacts with GPHN. In terms of tissue distribution, detected in brain. Detected at low levels in heart.

The protein localises to the cytoplasm. Its subcellular location is the postsynaptic density. Its function is as follows. Acts as a guanine nucleotide exchange factor (GEF) for CDC42. Promotes formation of GPHN clusters. The polypeptide is Rho guanine nucleotide exchange factor 9 (ARHGEF9) (Homo sapiens (Human)).